The chain runs to 309 residues: Malate dehydrogenase (309 aa).

Residues 9–14 (GAGFVG) and D33 contribute to the NAD(+) site. Substrate-binding residues include R82 and R88. NAD(+) contacts are provided by residues N95 and 118–120 (VNN). Substrate is bound by residues N120 and R151. H175 functions as the Proton acceptor in the catalytic mechanism.

The protein belongs to the LDH/MDH superfamily. MDH type 3 family.

It carries out the reaction (S)-malate + NAD(+) = oxaloacetate + NADH + H(+). In terms of biological role, catalyzes the reversible oxidation of malate to oxaloacetate. This is Malate dehydrogenase from Roseiflexus castenholzii (strain DSM 13941 / HLO8).